The following is a 58-amino-acid chain: uncharacterized protein (58 aa).

This is an uncharacterized protein from Dictyostelium discoideum (Social amoeba).